The primary structure comprises 734 residues: Polyribonucleotide nucleotidyltransferase (734 aa).

Residues Asp-497 and Asp-503 each coordinate Mg(2+). Positions 564 to 623 constitute a KH domain; sequence PRIIHITIDPDKIRDVIGPGGKVIKKIVEETGAEIDIEDDGRVFIAAVDQEKGRKAQEII. The region spanning 633-707 is the S1 motif domain; the sequence is GEIYTGRVTR…SQGRLKLSKK (75 aa). Residues 700 to 734 are disordered; that stretch reads GRLKLSKKEATPPPESTAMKEGRAHRPSRRRESAR. Residues 717–734 show a composition bias toward basic and acidic residues; sequence AMKEGRAHRPSRRRESAR.

It belongs to the polyribonucleotide nucleotidyltransferase family. It depends on Mg(2+) as a cofactor.

It is found in the cytoplasm. The catalysed reaction is RNA(n+1) + phosphate = RNA(n) + a ribonucleoside 5'-diphosphate. In terms of biological role, involved in mRNA degradation. Catalyzes the phosphorolysis of single-stranded polyribonucleotides processively in the 3'- to 5'-direction. The chain is Polyribonucleotide nucleotidyltransferase from Pelotomaculum thermopropionicum (strain DSM 13744 / JCM 10971 / SI).